A 549-amino-acid polypeptide reads, in one-letter code: Glucose-6-phosphate isomerase (549 aa).

Residue E354 is the Proton donor of the active site. Active-site residues include H385 and K513.

It belongs to the GPI family.

It localises to the cytoplasm. It catalyses the reaction alpha-D-glucose 6-phosphate = beta-D-fructose 6-phosphate. The protein operates within carbohydrate biosynthesis; gluconeogenesis. It participates in carbohydrate degradation; glycolysis; D-glyceraldehyde 3-phosphate and glycerone phosphate from D-glucose: step 2/4. Functionally, catalyzes the reversible isomerization of glucose-6-phosphate to fructose-6-phosphate. The chain is Glucose-6-phosphate isomerase from Nitrosococcus oceani (strain ATCC 19707 / BCRC 17464 / JCM 30415 / NCIMB 11848 / C-107).